We begin with the raw amino-acid sequence, 147 residues long: Large ribosomal subunit protein uL13 (147 aa).

Belongs to the universal ribosomal protein uL13 family. Part of the 50S ribosomal subunit.

This protein is one of the early assembly proteins of the 50S ribosomal subunit, although it is not seen to bind rRNA by itself. It is important during the early stages of 50S assembly. The sequence is that of Large ribosomal subunit protein uL13 from Kineococcus radiotolerans (strain ATCC BAA-149 / DSM 14245 / SRS30216).